Here is an 873-residue protein sequence, read N- to C-terminus: Actin-related protein 8 (873 aa).

Residues 108 to 129 (DEQVKPTSSTSSTSTTEEVEIK) are disordered. The span at 114-123 (TSSTSSTSTT) shows a compositional bias: low complexity. 368-371 (DLGH) serves as a coordination point for ATP. The segment covering 596-650 (NNNNNNNNSSSSSNNNNNNNNSGSNSNINSYNNNNNNNNNNNNNNNNNNNNSFNN) has biased composition (low complexity). The segment at 596 to 701 (NNNNNNNNSS…TSSPTKKLKI (106 aa)) is disordered. The segment covering 651–668 (VTIVTSTLNSNSTVPSTL) has biased composition (polar residues). Positions 669–696 (NSNSTVPSISNSNSTVPSTSTSTTSSPT) are enriched in low complexity. Residues 762–804 (FKQLEQQYQAQQLQFQQQLQQQQQQQQQLQQQLQNSTNSATTT) are a coiled coil.

Belongs to the actin family. ARP8 subfamily. In terms of assembly, component of the chromatin remodeling INO80 complex. Exists as monomers and dimers, but the dimer is most probably the biologically relevant form required for stable interactions with histones that exploits the twofold symmetry of the nucleosome core.

It is found in the nucleus. The protein resides in the cytoplasm. Its subcellular location is the cytoskeleton. Functionally, plays an important role in the functional organization of mitotic chromosomes. Exhibits low basal ATPase activity, and unable to polymerize. Its function is as follows. Proposed core component of the chromatin remodeling INO80 complex which is involved in transcriptional regulation, DNA replication and probably DNA repair. Strongly prefer nucleosomes and H3-H4 tetramers over H2A-H2B dimers, suggesting it may act as a nucleosome recognition module within the complex. In Dictyostelium discoideum (Social amoeba), this protein is Actin-related protein 8.